Reading from the N-terminus, the 357-residue chain is Peptide chain release factor 1 (357 aa).

Glutamine 235 bears the N5-methylglutamine mark. Residues 282–294 are compositionally biased toward basic and acidic residues; it reads RQKADTERSESRR. The disordered stretch occupies residues 282–308; the sequence is RQKADTERSESRRSQVGSGDRSERIRT.

It belongs to the prokaryotic/mitochondrial release factor family. In terms of processing, methylated by PrmC. Methylation increases the termination efficiency of RF1.

Its subcellular location is the cytoplasm. Its function is as follows. Peptide chain release factor 1 directs the termination of translation in response to the peptide chain termination codons UAG and UAA. The protein is Peptide chain release factor 1 of Brucella anthropi (strain ATCC 49188 / DSM 6882 / CCUG 24695 / JCM 21032 / LMG 3331 / NBRC 15819 / NCTC 12168 / Alc 37) (Ochrobactrum anthropi).